We begin with the raw amino-acid sequence, 387 residues long: Putative F-box protein At1g47800 (387 aa).

Residues leucine 8 to phenylalanine 54 enclose the F-box domain.

The chain is Putative F-box protein At1g47800 from Arabidopsis thaliana (Mouse-ear cress).